The primary structure comprises 400 residues: Tyrosine--tRNA ligase (400 aa).

Positions 45–54 match the 'HIGH' region motif; that stretch reads PTAPDLHLGH. A 'KMSKS' region motif is present at residues 230–234; sequence KMSKS. Lys233 is a binding site for ATP. The S4 RNA-binding domain maps to 339–399; sequence EWIARVLVIA…GKRRFAKVII (61 aa).

It belongs to the class-I aminoacyl-tRNA synthetase family. TyrS type 2 subfamily. Homodimer.

Its subcellular location is the cytoplasm. It carries out the reaction tRNA(Tyr) + L-tyrosine + ATP = L-tyrosyl-tRNA(Tyr) + AMP + diphosphate + H(+). Functionally, catalyzes the attachment of tyrosine to tRNA(Tyr) in a two-step reaction: tyrosine is first activated by ATP to form Tyr-AMP and then transferred to the acceptor end of tRNA(Tyr). The protein is Tyrosine--tRNA ligase of Helicobacter hepaticus (strain ATCC 51449 / 3B1).